Here is a 665-residue protein sequence, read N- to C-terminus: Protein LOW PHOTOSYNTHETIC EFFICIENCY 1, chloroplastic (665 aa).

The N-terminal 68 residues, 1-68 (MQALSILPLK…VSSNRKVLFL (68 aa)), are a transit peptide targeting the chloroplast. PPR repeat units follow at residues 145 to 179 (PLQV…KSES), 181 to 217 (GVIG…GIVP), 218 to 252 (NIVT…GFEP), 253 to 283 (NPIT…LREK), 309 to 344 (GRIC…GVRP), 345 to 375 (SREE…IRER), 380 to 414 (SLSV…GPEP), 422 to 456 (VVSH…GLKP), 457 to 491 (QRRH…GEKP), 492 to 526 (TVIS…GIEP), 527 to 561 (NLYA…GIEP), 562 to 596 (SVVT…NVEP), and 597 to 631 (NEIT…GLKL).

Belongs to the PPR family. P subfamily. Interacts with HCF173.

The protein resides in the plastid. It localises to the chloroplast thylakoid membrane. Its subcellular location is the chloroplast stroma. Functionally, required for light-regulated photosystem II (PSII) biogenesis and grana thylakoids formation by binding to the 5' UTR of PSII subunit mRNAs (e.g. psbJ, psbN and psbA) in a light-dependent manner through a redox-based mechanism, and facilitating the association of HCF173 with target mRNAs, which encodes PSII reaction center proteins (e.g. J, N and D1), thus regulating its expression by modulating ribosome loading. This chain is Protein LOW PHOTOSYNTHETIC EFFICIENCY 1, chloroplastic, found in Arabidopsis thaliana (Mouse-ear cress).